A 218-amino-acid polypeptide reads, in one-letter code: 3,4-dihydroxy-2-butanone 4-phosphate synthase (218 aa).

Residues 38–39, aspartate 43, 151–155, and glutamate 175 contribute to the D-ribulose 5-phosphate site; these read RE and RRGHT. Glutamate 39 provides a ligand contact to Mg(2+). Histidine 154 lines the Mg(2+) pocket.

It belongs to the DHBP synthase family. Homodimer. Mg(2+) serves as cofactor. Mn(2+) is required as a cofactor.

The catalysed reaction is D-ribulose 5-phosphate = (2S)-2-hydroxy-3-oxobutyl phosphate + formate + H(+). It functions in the pathway cofactor biosynthesis; riboflavin biosynthesis; 2-hydroxy-3-oxobutyl phosphate from D-ribulose 5-phosphate: step 1/1. Its function is as follows. Catalyzes the conversion of D-ribulose 5-phosphate to formate and 3,4-dihydroxy-2-butanone 4-phosphate. This is 3,4-dihydroxy-2-butanone 4-phosphate synthase from Vibrio cholerae serotype O1 (strain ATCC 39541 / Classical Ogawa 395 / O395).